The following is a 209-amino-acid chain: Large ribosomal subunit protein uL3 (209 aa).

Residues S127 to A151 form a disordered region.

Belongs to the universal ribosomal protein uL3 family. In terms of assembly, part of the 50S ribosomal subunit. Forms a cluster with proteins L14 and L19.

Functionally, one of the primary rRNA binding proteins, it binds directly near the 3'-end of the 23S rRNA, where it nucleates assembly of the 50S subunit. In Borrelia turicatae (strain 91E135), this protein is Large ribosomal subunit protein uL3.